The chain runs to 748 residues: Serine/threonine-protein kinase CG17528 (748 aa).

Polar residues-rich tracts occupy residues 22 to 35 (QASPSATSPQSVPS) and 47 to 59 (EKTNQPHNVQEDN). Disordered stretches follow at residues 22–41 (QASPSATSPQSVPSKANVVT) and 47–81 (EKTNQPHNVQEDNNYNRDCDSPESSSSEQDKELDD). Phosphoserine occurs at positions 67, 70, 73, 87, 88, and 89. Residue threonine 91 is modified to Phosphothreonine. Phosphoserine is present on serine 93. Position 100 is a phosphothreonine (threonine 100). Doublecortin domains are found at residues 158–244 (LRIK…VEYN) and 313–396 (RIVT…AEDF). One can recognise a Protein kinase domain in the interval 477 to 735 (YSLGRIIGDG…SEDILDHSWT (259 aa)). ATP-binding positions include 483–491 (IGDGNFAIV) and lysine 506. Aspartate 598 acts as the Proton acceptor in catalysis.

The protein belongs to the protein kinase superfamily. CAMK Ser/Thr protein kinase family. CaMK subfamily.

It carries out the reaction L-seryl-[protein] + ATP = O-phospho-L-seryl-[protein] + ADP + H(+). The catalysed reaction is L-threonyl-[protein] + ATP = O-phospho-L-threonyl-[protein] + ADP + H(+). This Drosophila melanogaster (Fruit fly) protein is Serine/threonine-protein kinase CG17528.